The sequence spans 510 residues: DNA nucleotidylexotransferase (510 aa).

Positions 11 to 17 match the Nuclear localization signal motif; sequence PRRKQPK. Residues 27-124 form the BRCT domain; sequence KYDIKFKDIA…QPVEIERKHR (98 aa). Residues 254–258 are involved in DNA binding; the sequence is VGLRT. Residues 329-334 and 338-341 each bind a 2'-deoxyribonucleoside 5'-triphosphate; these read GFRRGN and HDVD. Mg(2+)-binding residues include aspartate 339, aspartate 341, and aspartate 434. Position 449–450 (449–450) interacts with a 2'-deoxyribonucleoside 5'-triphosphate; the sequence is GW.

This sequence belongs to the DNA polymerase type-X family. The cofactor is Mg(2+).

The protein localises to the nucleus. The catalysed reaction is DNA(n) + a 2'-deoxyribonucleoside 5'-triphosphate = DNA(n+1) + diphosphate. In terms of biological role, template-independent DNA polymerase which catalyzes the random addition of deoxynucleoside 5'-triphosphate to the 3'-end of a DNA initiator. One of the in vivo functions of this enzyme is the addition of nucleotides at the junction (N region) of rearranged Ig heavy chain and T-cell receptor gene segments during the maturation of B- and T-cells. The chain is DNA nucleotidylexotransferase (DNTT) from Ambystoma mexicanum (Axolotl).